Here is an 816-residue protein sequence, read N- to C-terminus: Molybdenum cofactor sulfurase (816 aa).

An N6-(pyridoxal phosphate)lysine modification is found at K273. Residue C427 is part of the active site. The MOSC domain occupies 647-812 (NSDSQSHSCI…IRVGEEIIPN (166 aa)).

This sequence belongs to the class-V pyridoxal-phosphate-dependent aminotransferase family. MOCOS subfamily. Requires pyridoxal 5'-phosphate as cofactor. In terms of tissue distribution, ubiquitously expressed.

The catalysed reaction is Mo-molybdopterin + L-cysteine + AH2 = thio-Mo-molybdopterin + L-alanine + A + H2O. It functions in the pathway cofactor biosynthesis; molybdopterin biosynthesis. Its function is as follows. Sulfurates the molybdenum cofactor. Sulfation of molybdenum is essential for xanthine dehydrogenase (XDH) and aldehyde oxidase (ADO) enzymes in which molybdenum cofactor is liganded by 1 oxygen and 1 sulfur atom in active form. The protein is Molybdenum cofactor sulfurase (FLACCA) of Solanum lycopersicum (Tomato).